The primary structure comprises 200 residues: Holliday junction branch migration complex subunit RuvA (200 aa).

The interval 1–63 (MIALLTGQIA…EDAILLYGFR (63 aa)) is domain I. The tract at residues 64-142 (TRTEKSFFQL…KLDSGSIPAG (79 aa)) is domain II. The flexible linker stretch occupies residues 143-153 (DAVGRSLPAGS). A domain III region spans residues 153-200 (SVLDDVSSALVNLGYKDPQVRKVLAELDCAGSASVEEVLKQALKILMK).

Belongs to the RuvA family. Homotetramer. Forms an RuvA(8)-RuvB(12)-Holliday junction (HJ) complex. HJ DNA is sandwiched between 2 RuvA tetramers; dsDNA enters through RuvA and exits via RuvB. An RuvB hexamer assembles on each DNA strand where it exits the tetramer. Each RuvB hexamer is contacted by two RuvA subunits (via domain III) on 2 adjacent RuvB subunits; this complex drives branch migration. In the full resolvosome a probable DNA-RuvA(4)-RuvB(12)-RuvC(2) complex forms which resolves the HJ.

It localises to the cytoplasm. The RuvA-RuvB-RuvC complex processes Holliday junction (HJ) DNA during genetic recombination and DNA repair, while the RuvA-RuvB complex plays an important role in the rescue of blocked DNA replication forks via replication fork reversal (RFR). RuvA specifically binds to HJ cruciform DNA, conferring on it an open structure. The RuvB hexamer acts as an ATP-dependent pump, pulling dsDNA into and through the RuvAB complex. HJ branch migration allows RuvC to scan DNA until it finds its consensus sequence, where it cleaves and resolves the cruciform DNA. This is Holliday junction branch migration complex subunit RuvA from Trichlorobacter lovleyi (strain ATCC BAA-1151 / DSM 17278 / SZ) (Geobacter lovleyi).